The chain runs to 176 residues: ATP-dependent protease subunit HslV (176 aa).

The active site involves Thr-2. Na(+)-binding residues include Ala-157, Cys-160, and Thr-163.

It belongs to the peptidase T1B family. HslV subfamily. A double ring-shaped homohexamer of HslV is capped on each side by a ring-shaped HslU homohexamer. The assembly of the HslU/HslV complex is dependent on binding of ATP.

Its subcellular location is the cytoplasm. The enzyme catalyses ATP-dependent cleavage of peptide bonds with broad specificity.. Allosterically activated by HslU binding. In terms of biological role, protease subunit of a proteasome-like degradation complex believed to be a general protein degrading machinery. The chain is ATP-dependent protease subunit HslV from Buchnera aphidicola subsp. Schizaphis graminum (strain Sg).